Consider the following 119-residue polypeptide: Holo-[acyl-carrier-protein] synthase (119 aa).

Mg(2+) is bound by residues Asp-8 and Glu-58.

Belongs to the P-Pant transferase superfamily. AcpS family. Requires Mg(2+) as cofactor.

It localises to the cytoplasm. The enzyme catalyses apo-[ACP] + CoA = holo-[ACP] + adenosine 3',5'-bisphosphate + H(+). Transfers the 4'-phosphopantetheine moiety from coenzyme A to a Ser of acyl-carrier-protein. The polypeptide is Holo-[acyl-carrier-protein] synthase (Streptococcus suis (strain 05ZYH33)).